A 240-amino-acid polypeptide reads, in one-letter code: Leucyl/phenylalanyl-tRNA--protein transferase (240 aa).

This sequence belongs to the L/F-transferase family.

Its subcellular location is the cytoplasm. The catalysed reaction is N-terminal L-lysyl-[protein] + L-leucyl-tRNA(Leu) = N-terminal L-leucyl-L-lysyl-[protein] + tRNA(Leu) + H(+). It carries out the reaction N-terminal L-arginyl-[protein] + L-leucyl-tRNA(Leu) = N-terminal L-leucyl-L-arginyl-[protein] + tRNA(Leu) + H(+). It catalyses the reaction L-phenylalanyl-tRNA(Phe) + an N-terminal L-alpha-aminoacyl-[protein] = an N-terminal L-phenylalanyl-L-alpha-aminoacyl-[protein] + tRNA(Phe). Its function is as follows. Functions in the N-end rule pathway of protein degradation where it conjugates Leu, Phe and, less efficiently, Met from aminoacyl-tRNAs to the N-termini of proteins containing an N-terminal arginine or lysine. In Maridesulfovibrio salexigens (strain ATCC 14822 / DSM 2638 / NCIMB 8403 / VKM B-1763) (Desulfovibrio salexigens), this protein is Leucyl/phenylalanyl-tRNA--protein transferase.